Reading from the N-terminus, the 461-residue chain is Asparagine--tRNA ligase (461 aa).

Belongs to the class-II aminoacyl-tRNA synthetase family. Homodimer.

It is found in the cytoplasm. It catalyses the reaction tRNA(Asn) + L-asparagine + ATP = L-asparaginyl-tRNA(Asn) + AMP + diphosphate + H(+). In Nitratidesulfovibrio vulgaris (strain DP4) (Desulfovibrio vulgaris), this protein is Asparagine--tRNA ligase.